Reading from the N-terminus, the 593-residue chain is Uroporphyrinogen-III C-methyltransferase (593 aa).

The interval 278–303 (ETSSSPNKKTKQETVTEGVVPPTDEN) is disordered.

The protein belongs to the precorrin methyltransferase family.

The enzyme catalyses uroporphyrinogen III + 2 S-adenosyl-L-methionine = precorrin-2 + 2 S-adenosyl-L-homocysteine + H(+). Functionally, siroheme synthase involved in methionine biosynthesis. This Saccharomyces cerevisiae (strain ATCC 204508 / S288c) (Baker's yeast) protein is Uroporphyrinogen-III C-methyltransferase.